The chain runs to 355 residues: UDP-N-acetylglucosamine--N-acetylmuramyl-(pentapeptide) pyrophosphoryl-undecaprenol N-acetylglucosamine transferase (355 aa).

UDP-N-acetyl-alpha-D-glucosamine is bound by residues 15-17, Asn127, Arg163, Ser191, Ile244, 263-268, and Gln288; these read TGG and ALTVSE.

It belongs to the glycosyltransferase 28 family. MurG subfamily.

It is found in the cell inner membrane. The enzyme catalyses di-trans,octa-cis-undecaprenyl diphospho-N-acetyl-alpha-D-muramoyl-L-alanyl-D-glutamyl-meso-2,6-diaminopimeloyl-D-alanyl-D-alanine + UDP-N-acetyl-alpha-D-glucosamine = di-trans,octa-cis-undecaprenyl diphospho-[N-acetyl-alpha-D-glucosaminyl-(1-&gt;4)]-N-acetyl-alpha-D-muramoyl-L-alanyl-D-glutamyl-meso-2,6-diaminopimeloyl-D-alanyl-D-alanine + UDP + H(+). It functions in the pathway cell wall biogenesis; peptidoglycan biosynthesis. Its function is as follows. Cell wall formation. Catalyzes the transfer of a GlcNAc subunit on undecaprenyl-pyrophosphoryl-MurNAc-pentapeptide (lipid intermediate I) to form undecaprenyl-pyrophosphoryl-MurNAc-(pentapeptide)GlcNAc (lipid intermediate II). This is UDP-N-acetylglucosamine--N-acetylmuramyl-(pentapeptide) pyrophosphoryl-undecaprenol N-acetylglucosamine transferase from Salmonella arizonae (strain ATCC BAA-731 / CDC346-86 / RSK2980).